Reading from the N-terminus, the 63-residue chain is Large ribosomal subunit protein uL29 (63 aa).

The protein belongs to the universal ribosomal protein uL29 family.

The polypeptide is Large ribosomal subunit protein uL29 (Aeromonas salmonicida (strain A449)).